The chain runs to 1013 residues: Dichlorochromopyrrolate synthase (1013 aa).

This sequence belongs to the RebD family. As to quaternary structure, homodimer. It depends on heme as a cofactor.

The catalysed reaction is 2 3-(7-chloroindol-3-yl)-2-iminopropanoate + H2O2 = dichlorochromopyrrolate + NH4(+) + 2 H2O + H(+). It catalyses the reaction 2 2-iminio-3-(indol-3-yl)propanoate + H2O2 = chromopyrrolate + NH4(+) + 2 H2O + H(+). The enzyme catalyses 2 H2O2 = O2 + 2 H2O. Involved in the biosynthesis of the indolocarbazole antitumor agent rebeccamycin. Catalyzes the hydrogen peroxide-dependent dimerization of two L-tryptophan-derived molecules (imine form of indole 3-pyruvate (IPA)), to form dichlorochromopyrrolic acid (CPA), the precursor for the six-ring bisindolopyrrolocarbazole scaffold of the rebeccamycin. The hydrogen peroxide is provided together with iminoindolpropanoate by RebO. Due to the instability of indole 3-pyruvate (IPA), which is hydrolyzed in solution and exits in equilibrium with the predominant ketone form of IPA, the concerted functioning of the RebO/RebD system appears to prevent the buildup of significant amounts of IPA and its imine in solution, effectively shepherding the imine further down the biosynthetic chain. The polypeptide is Dichlorochromopyrrolate synthase (rebD) (Lentzea aerocolonigenes (Lechevalieria aerocolonigenes)).